The primary structure comprises 582 residues: Semenogelin-2 (582 aa).

Residues 1–23 form the signal peptide; sequence MKSIILFVLSLLLILEKQAAVMG. 6 disordered regions span residues 26-65, 132-159, 272-295, 318-358, 379-417, and 439-582; these read CGSK…SFSI, GGQA…SSQY, NLNQ…RTEE, TEEK…ERHL, EEQI…EERR, and EEQI…PVST. Composition is skewed to polar residues over residues 31-40 and 137-159; these read QLPSGSSQFP and RGTQ…SSQY. Residues 325 to 335 show a composition bias toward polar residues; it reads KSQNQVTIHSQ. Positions 336-345 are enriched in basic and acidic residues; the sequence is GQEHGHKENK. Composition is skewed to polar residues over residues 379-397, 439-457, 487-496, and 506-524; these read EEQI…SQAQ, KDVSQSSTSF, and SQIQ…QNAK. Composition is skewed to basic and acidic residues over residues 525–552 and 559–582; these read GKSD…ESSE and TEHE…PVST.

This sequence belongs to the semenogelin family. As to quaternary structure, interacts with SERPINA5.

Its subcellular location is the secreted. Functionally, participates in the formation of a gel matrix (sperm coagulum) entrapping the accessory gland secretions and ejaculated spermatozoa. In Hylobates lar (Lar gibbon), this protein is Semenogelin-2 (SEMG2).